Here is a 205-residue protein sequence, read N- to C-terminus: Mitochondrial ATP-independent inner membrane protease subunit 2 (205 aa).

Catalysis depends on residues E59 and R104.

Belongs to the peptidase S26 family. IMP1 subfamily. As to quaternary structure, heterodimer of 2 subunits, IMP1A/B and IMP12.

It is found in the mitochondrion inner membrane. In terms of biological role, catalyzes the removal of transit peptides required for the targeting of proteins from the mitochondrial matrix, across the inner membrane, into the inter-membrane space. The sequence is that of Mitochondrial ATP-independent inner membrane protease subunit 2 from Arabidopsis thaliana (Mouse-ear cress).